Consider the following 105-residue polypeptide: Integration host factor (105 aa).

Residues 64 to 71 (LPKVGKVK) carry the H2TH motif, binds DNA motif. Positions 82-94 (APTRRLRGLGDRQ) are lid, binds DNA.

It belongs to the actinobacterial IHF (aIHF) family. As to quaternary structure, homodimer in solution. Binds DNA as a monomer.

The protein resides in the cytoplasm. In terms of biological role, a nucleoid-associated protein (NAP) required for septum formation and normal cell division as well as for DNA segregation. Binds about 135 sites across the chromosome, most of which are genes involved in virulence; most DNA-binding sites are immediately upstream of transcription start sites. When mIHF is depleted most of the genes are down-regulated. Binds supercoiled and linear dsDNA in a concentration-dependent manner, probably non-sequence specifically. Binding compacts DNA, protecting it from degradation. Initial binding to supercoiled DNA opens it fully, followed by bending and compaction. Bends and thus compacts linear DNA. Binds DNA via 2 sites, forms left-handed loops on linear DNA; at low concentrations unwinds larger cosmids (42.6 kb) then collapses and condenses DNA as protein levels rise. Forms mostly left-handed loops on condensing cosmid DNA. The protein is Integration host factor of Mycobacterium tuberculosis (strain ATCC 25618 / H37Rv).